Consider the following 168-residue polypeptide: Cytochrome c oxidase subunit 2 (168 aa).

Residues 1-3 lie on the Cytoplasmic side of the membrane; that stretch reads MVD. A helical transmembrane segment spans residues 4–38; the sequence is EHKAHKAILAYEKGWLAFSLAMLFVFIALIAYTLA. The Periplasmic portion of the chain corresponds to 39–168; sequence THTAGVIPAG…NMFGTIVVKE (130 aa). Cu cation is bound by residues His114, Cys149, Cys153, and His157.

Belongs to the cytochrome c oxidase subunit 2 family.

The protein localises to the cell membrane. It catalyses the reaction 4 Fe(II)-[cytochrome c] + O2 + 8 H(+)(in) = 4 Fe(III)-[cytochrome c] + 2 H2O + 4 H(+)(out). Its function is as follows. Subunits I and II form the functional core of the enzyme complex. Electrons originating in cytochrome c are transferred via heme a and Cu(A) to the binuclear center formed by heme a3 and Cu(B). The sequence is that of Cytochrome c oxidase subunit 2 (cbaB) from Thermus thermophilus (strain ATCC 27634 / DSM 579 / HB8).